A 122-amino-acid chain; its full sequence is Large ribosomal subunit protein bL12 (122 aa).

It belongs to the bacterial ribosomal protein bL12 family. In terms of assembly, homodimer. Part of the ribosomal stalk of the 50S ribosomal subunit. Forms a multimeric L10(L12)X complex, where L10 forms an elongated spine to which 2 to 4 L12 dimers bind in a sequential fashion. Binds GTP-bound translation factors.

Forms part of the ribosomal stalk which helps the ribosome interact with GTP-bound translation factors. Is thus essential for accurate translation. This is Large ribosomal subunit protein bL12 from Actinobacillus succinogenes (strain ATCC 55618 / DSM 22257 / CCUG 43843 / 130Z).